A 344-amino-acid polypeptide reads, in one-letter code: E3 ubiquitin-protein ligase RING2-A (344 aa).

The segment at 2-181 is interaction with HIP2; the sequence is ATPVNAQCSS…EDNCDSRSHV (180 aa). The RING-type zinc-finger motif lies at 48 to 88; the sequence is CPICLDMLKNTMTTKECLHRFCSDCIVTALRSGNKECPTCR. The segment at 90-95 is interaction with nucleosomes via an acidic patch on histone H2A and histone H2B; sequence KLVSKR. Positions 148 to 230 are disordered; sequence QAMHRAQRVR…DPPGGGETGS (83 aa). Residues 180-192 are compositionally biased toward polar residues; sequence HVSNPSVHSNQEA.

As to quaternary structure, component of chromatin-associated Polycomb (PcG) complexes. Component of a PRC1-like complex. Component of some MLL1/MLL complex.

The protein resides in the nucleus. It is found in the cytoplasm. It localises to the chromosome. The catalysed reaction is S-ubiquitinyl-[E2 ubiquitin-conjugating enzyme]-L-cysteine + [acceptor protein]-L-lysine = [E2 ubiquitin-conjugating enzyme]-L-cysteine + N(6)-ubiquitinyl-[acceptor protein]-L-lysine.. The protein operates within protein modification; protein ubiquitination. Functionally, E3 ubiquitin-protein ligase that mediates monoubiquitination of 'Lys-119' of histone H2A (H2AK119Ub), thereby playing a central role in histone code and gene regulation. H2AK119Ub gives a specific tag for epigenetic transcriptional repression. Essential component of a Polycomb group (PcG) multiprotein PRC1-like complex, a complex class required to maintain the transcriptionally repressive state of many genes, including Hox genes, throughout development. PcG PRC1 complex acts via chromatin remodeling and modification of histones, rendering chromatin heritably changed in its expressibility. This Xenopus laevis (African clawed frog) protein is E3 ubiquitin-protein ligase RING2-A (rnf2-a).